Here is a 334-residue protein sequence, read N- to C-terminus: MYNLIKPLLFRQDPEKTHELMLGILSKWHRTPLSLFWKQNVASKPVRVMGIDFPNPVGLAAGLDKNAECIDAFSQMGFGFIEVGTVTPVAQPGNDKPRLFRLTEDEAIINRMGFNNDGVDELVKNVKASSYKGVLGINIGKNKNTPEEQAIDDYLACLNKVYPYADYVTINISSPNTPGLRNLQHGSSLDGLLSSLKTAQLTLAKEYERYVPLVVKIAPDLEDHEVEVMAQSLLKNEMDGVIATNTTLSRDGLQSSQAGEAGGLSGKPLQDKSTRVIELLCKTLQRKIPVIGVGGIDSVESAEAKLKAGASLVQVYTGFIYQGPGLIRSIVSHL.

Residues 61-65 (AGLDK) and Thr85 each bind FMN. Lys65 lines the substrate pocket. Residue 110 to 114 (NRMGF) participates in substrate binding. Residues Asn138 and Asn171 each contribute to the FMN site. Asn171 contacts substrate. Catalysis depends on Ser174, which acts as the Nucleophile. Asn176 lines the substrate pocket. Residues Lys216 and Thr244 each contribute to the FMN site. Position 245–246 (245–246 (NT)) interacts with substrate. FMN is bound by residues Gly266, Gly295, and 316–317 (YT).

It belongs to the dihydroorotate dehydrogenase family. Type 2 subfamily. In terms of assembly, monomer. FMN serves as cofactor.

The protein resides in the cell membrane. The enzyme catalyses (S)-dihydroorotate + a quinone = orotate + a quinol. It functions in the pathway pyrimidine metabolism; UMP biosynthesis via de novo pathway; orotate from (S)-dihydroorotate (quinone route): step 1/1. In terms of biological role, catalyzes the conversion of dihydroorotate to orotate with quinone as electron acceptor. This Idiomarina loihiensis (strain ATCC BAA-735 / DSM 15497 / L2-TR) protein is Dihydroorotate dehydrogenase (quinone).